A 177-amino-acid chain; its full sequence is Flavodoxin (177 aa).

Positions 4 to 173 (IGIFFGSDTG…RIDTWLDKLK (170 aa)) constitute a Flavodoxin-like domain.

This sequence belongs to the flavodoxin family. FMN serves as cofactor.

Its function is as follows. Low-potential electron donor to a number of redox enzymes. NifF is the electron donor to nitrogenase. This chain is Flavodoxin (nifF), found in Enterobacter agglomerans (Erwinia herbicola).